The sequence spans 543 residues: Splicing factor U2af large subunit B (543 aa).

Gly residues predominate over residues 1–10 (MADDNGGGGD). Residues 1 to 171 (MADDNGGGGD…IPTPSQLPGS (171 aa)) are disordered. Composition is skewed to basic and acidic residues over residues 17–78 (VRPE…DRDR) and 88–114 (EHRD…ERDG). Over residues 115 to 126 (HRRHRSRSRSRS) the composition is skewed to basic residues. 3 RRM domains span residues 207–290 (RRVY…RPTD), 327–405 (DRIF…RANQ), and 446–532 (QVVT…YPEN).

Belongs to the splicing factor SR family.

It localises to the nucleus. Its function is as follows. Necessary for the splicing of pre-mRNA. The sequence is that of Splicing factor U2af large subunit B (U2AF65B) from Triticum aestivum (Wheat).